The chain runs to 2201 residues: RNA-directed RNA polymerase L (2201 aa).

The endonuclease stretch occupies residues 26-285 (KNIMLAQTQI…VCSKSVEYTF (260 aa)). Mn(2+)-binding residues include glutamate 51, aspartate 88, and glutamate 101. Lysine 114 is an active-site residue. In terms of domain architecture, RdRp catalytic spans 1156–1352 (LDMKSVVRQS…FLSDRLNKFV (197 aa)). Mg(2+) is bound at residue aspartate 1312.

This sequence belongs to the Bunyavirales RNA polymerase family. In terms of assembly, homomultimer; the oligomeric structure is essential for the polymerase activity. Interacts with nucleoprotein N. Interacts with protein Z; this interaction inhibits viral transcription and replication, Z partially blocks the product exit tunnel for the releasing nascent RNA product. The cofactor is Mn(2+). It depends on Mg(2+) as a cofactor.

The protein localises to the virion. It is found in the host cytoplasm. It carries out the reaction RNA(n) + a ribonucleoside 5'-triphosphate = RNA(n+1) + diphosphate. Its function is as follows. RNA-dependent RNA polymerase, which is responsible for the replication and transcription of the viral RNA genome using antigenomic RNA as an intermediate. During transcription, synthesizes subgenomic RNAs and assures their capping by a cap-snatching mechanism, which involves the endonuclease activity cleaving the host capped pre-mRNAs. These short capped RNAs are then used as primers for viral transcription. The 3'-end of subgenomic mRNAs molecules are heterogeneous and not polyadenylated. The replicase function is to direct synthesis of antigenomic and genomic RNA which are encapsidated and non capped. As a consequence of the use of the same enzyme for both transcription and replication, these mechanisms need to be well coordinated. These processes may be regulated by proteins N and Z in a dose-dependent manner. Z protein inhibits the viral polymerase L und thus the viral transcription and RNA synthesis. The sequence is that of RNA-directed RNA polymerase L from Oecomys bicolor (Bicolored arboreal rice rat).